Consider the following 172-residue polypeptide: Shikimate kinase (172 aa).

Glycine 11–alanine 16 contributes to the ATP binding site. Threonine 15 is a Mg(2+) binding site. Positions 33, 57, and 79 each coordinate substrate. Arginine 117 is an ATP binding site. Substrate is bound at residue arginine 136.

This sequence belongs to the shikimate kinase family. In terms of assembly, monomer. Requires Mg(2+) as cofactor.

The protein localises to the cytoplasm. It carries out the reaction shikimate + ATP = 3-phosphoshikimate + ADP + H(+). Its pathway is metabolic intermediate biosynthesis; chorismate biosynthesis; chorismate from D-erythrose 4-phosphate and phosphoenolpyruvate: step 5/7. Its function is as follows. Catalyzes the specific phosphorylation of the 3-hydroxyl group of shikimic acid using ATP as a cosubstrate. This is Shikimate kinase from Pelotomaculum thermopropionicum (strain DSM 13744 / JCM 10971 / SI).